Consider the following 283-residue polypeptide: S-methyl-5'-thioadenosine phosphorylase (283 aa).

T18 contacts phosphate. An N6-acetyllysine modification is found at K51. Residues 60–61 (RH) and 93–94 (TA) contribute to the phosphate site. M196 contributes to the substrate binding site. Residue T197 coordinates phosphate. 220 to 222 (DYD) provides a ligand contact to substrate.

Belongs to the PNP/MTAP phosphorylase family. MTAP subfamily. Homotrimer.

It is found in the cytoplasm. It localises to the nucleus. The catalysed reaction is S-methyl-5'-thioadenosine + phosphate = 5-(methylsulfanyl)-alpha-D-ribose 1-phosphate + adenine. It participates in amino-acid biosynthesis; L-methionine biosynthesis via salvage pathway; S-methyl-5-thio-alpha-D-ribose 1-phosphate from S-methyl-5'-thioadenosine (phosphorylase route): step 1/1. Functionally, catalyzes the reversible phosphorylation of S-methyl-5'-thioadenosine (MTA) to adenine and 5-methylthioribose-1-phosphate. Involved in the breakdown of MTA, a major by-product of polyamine biosynthesis. Responsible for the first step in the methionine salvage pathway after MTA has been generated from S-adenosylmethionine. Has broad substrate specificity with 6-aminopurine nucleosides as preferred substrates. This Bos taurus (Bovine) protein is S-methyl-5'-thioadenosine phosphorylase.